A 193-amino-acid polypeptide reads, in one-letter code: dCTP deaminase (193 aa).

Residues 110 to 115, Asp128, 136 to 138, Tyr171, Lys178, and Gln182 contribute to the dCTP site; these read RSSLAR and VLE. Glu138 acts as the Proton donor/acceptor in catalysis. Residues 169-193 form a disordered region; the sequence is RPYNRRQDAKYRDQQGAVASRIDKD.

This sequence belongs to the dCTP deaminase family. Homotrimer.

The enzyme catalyses dCTP + H2O + H(+) = dUTP + NH4(+). It participates in pyrimidine metabolism; dUMP biosynthesis; dUMP from dCTP (dUTP route): step 1/2. In terms of biological role, catalyzes the deamination of dCTP to dUTP. The polypeptide is dCTP deaminase (Citrobacter koseri (strain ATCC BAA-895 / CDC 4225-83 / SGSC4696)).